Reading from the N-terminus, the 159-residue chain is Immunoglobulin J chain (159 aa).

An N-terminal signal peptide occupies residues 1–22 (MKNHLLFWGVLAVFIKAVHVKA). The residue at position 23 (Q23) is a Pyrrolidone carboxylic acid. Intrachain disulfides connect C35–C123, C94–C114, and C131–C156. N-linked (GlcNAc...) (complex) asparagine glycosylation occurs at N71.

Part of the secretory IgA (sIgA) complex that consists of two, four or five IgA monomers, and two additional non-Ig polypeptides, namely the JCHAIN and the secretory component (the proteolytic product of PIGR). Part of the secretory IgM (sIgM) complex that consists of five IgM monomers, and two additional non-Ig polypeptides, namely the JCHAIN and the secretory component (the proteolytic product of PIGR). JCHAIN-containing IgM interacts (via CH4 domain) with FCRM (via Ig-like domain).

The protein resides in the secreted. In terms of biological role, serves to link two monomer units of either IgM or IgA. In the case of IgM, the J chain-joined dimer is a nucleating unit for the IgM pentamer, and in the case of IgA it induces dimers and/or larger polymers. It also helps to bind these immunoglobulins to secretory component. This is Immunoglobulin J chain from Homo sapiens (Human).